Reading from the N-terminus, the 668-residue chain is Potassium-transporting ATPase ATP-binding subunit (668 aa).

4 helical membrane passes run 31–51 (MFLTEVSLFVSIFIYIFPSFF), 62–82 (FYVAVVVLLFLTVFFSSISTA), 213–233 (TVFLSGLTLIFLVITASIFAI), and 243–263 (IVMLIVLLIALIPTTIGALLP). Asp298 acts as the 4-aspartylphosphate intermediate in catalysis. Residues Asp335, Glu339, 367 to 374 (FSSETKFS), and Lys385 each bind ATP. 2 residues coordinate Mg(2+): Asp504 and Asp508. A run of 3 helical transmembrane segments spans residues 573-593 (YFVIIPAIFYMFPSLSLVNIL), 599-619 (IVAVTSALIFNTIIIVFLIPL), and 644-664 (IGGVITPFIAIKLIYMLLIAW).

It belongs to the cation transport ATPase (P-type) (TC 3.A.3) family. Type IA subfamily. As to quaternary structure, the system is composed of three essential subunits: KdpA, KdpB and KdpC.

Its subcellular location is the cell membrane. The catalysed reaction is K(+)(out) + ATP + H2O = K(+)(in) + ADP + phosphate + H(+). Its function is as follows. Part of the high-affinity ATP-driven potassium transport (or Kdp) system, which catalyzes the hydrolysis of ATP coupled with the electrogenic transport of potassium into the cytoplasm. This subunit is responsible for energy coupling to the transport system and for the release of the potassium ions to the cytoplasm. This Thermoplasma volcanium (strain ATCC 51530 / DSM 4299 / JCM 9571 / NBRC 15438 / GSS1) protein is Potassium-transporting ATPase ATP-binding subunit.